The chain runs to 243 residues: Large ribosomal subunit protein uL2 (243 aa).

The disordered stretch occupies residues 198–243 (VDHPFGGGGRQHPGKPKSVSRDTPPGRKVGDIASKRTGRGGKGGQE). Positions 221-231 (PPGRKVGDIAS) are enriched in basic and acidic residues.

It belongs to the universal ribosomal protein uL2 family. As to quaternary structure, part of the 50S ribosomal subunit. Forms a bridge to the 30S subunit in the 70S ribosome.

One of the primary rRNA binding proteins. Required for association of the 30S and 50S subunits to form the 70S ribosome, for tRNA binding and peptide bond formation. It has been suggested to have peptidyltransferase activity; this is somewhat controversial. Makes several contacts with the 16S rRNA in the 70S ribosome. In Natronomonas pharaonis (strain ATCC 35678 / DSM 2160 / CIP 103997 / JCM 8858 / NBRC 14720 / NCIMB 2260 / Gabara) (Halobacterium pharaonis), this protein is Large ribosomal subunit protein uL2.